Reading from the N-terminus, the 156-residue chain is Small ribosomal subunit protein uS7 (156 aa).

The protein belongs to the universal ribosomal protein uS7 family. Part of the 30S ribosomal subunit. Contacts proteins S9 and S11.

In terms of biological role, one of the primary rRNA binding proteins, it binds directly to 16S rRNA where it nucleates assembly of the head domain of the 30S subunit. Is located at the subunit interface close to the decoding center, probably blocks exit of the E-site tRNA. This is Small ribosomal subunit protein uS7 from Neisseria meningitidis serogroup C (strain 053442).